Reading from the N-terminus, the 444-residue chain is Gentisate transporter (444 aa).

Transmembrane regions (helical) follow at residues 42 to 64 (AAVLIGWFFVIFDGYDLIVYGTV), 79 to 101 (LGTIGSTAFFGMAIGAVFIGRLS), 108 to 127 (AAVIGSVLILSVFTMLCAFA), 131 to 153 (WVFGAFRFIAGLGLGGLVPSVNA), 166 to 188 (AWATVMMSGVPIGGSIAAVLALV), 198 to 220 (WRFMFLIALIPLVVGLPIAMKVI), 252 to 274 (WISIWFALATFVTLLAWYGLGTW), 289 to 311 (ALMFTLALNLGAVIGSVVTAWAG), 318 to 340 (RSGVIAAGIAGIALLLLLTYPPV), 344 to 366 (YVILILAGVGTHGTQILIIAAVA), 378 to 400 (LGWALGVGRIGAVVAPQLAGLLL), and 410 to 428 (FIMFGTAALLSALALSVLL).

It belongs to the major facilitator superfamily. Aromatic acid:H(+) symporter (AAHS) (TC 2.A.1.15) family.

It is found in the cell membrane. Functionally, transport of gentisate (2,5-dihydroxybenzoate) into the cell. Does not transport 3-hydroxybenzoate or benzoate. The sequence is that of Gentisate transporter (genK) from Corynebacterium glutamicum (strain ATCC 13032 / DSM 20300 / JCM 1318 / BCRC 11384 / CCUG 27702 / LMG 3730 / NBRC 12168 / NCIMB 10025 / NRRL B-2784 / 534).